The primary structure comprises 159 residues: Ribosome maturation factor RimP (159 aa).

Belongs to the RimP family.

The protein resides in the cytoplasm. Functionally, required for maturation of 30S ribosomal subunits. In Geotalea daltonii (strain DSM 22248 / JCM 15807 / FRC-32) (Geobacter daltonii), this protein is Ribosome maturation factor RimP.